The chain runs to 186 residues: Large ribosomal subunit protein uL22 (186 aa).

At Ser158 the chain carries Phosphoserine. Residues 159-186 (KATDDEPAKKKLSKKKLQRQKEKMLRSE) form a disordered region. Thr161 is subject to Phosphothreonine. Residues 177 to 186 (RQKEKMLRSE) show a composition bias toward basic and acidic residues.

The protein belongs to the universal ribosomal protein uL22 family.

This is Large ribosomal subunit protein uL22 (RpL17) from Drosophila melanogaster (Fruit fly).